The sequence spans 419 residues: L-rhamnose isomerase (419 aa).

Mn(2+)-binding residues include His-262, Asp-294, and Asp-296.

The protein belongs to the rhamnose isomerase family. In terms of assembly, homotetramer. Mn(2+) is required as a cofactor.

The protein localises to the cytoplasm. The enzyme catalyses L-rhamnopyranose = L-rhamnulose. The protein operates within carbohydrate degradation; L-rhamnose degradation; glycerone phosphate from L-rhamnose: step 1/3. Catalyzes the interconversion of L-rhamnose and L-rhamnulose. This Shigella flexneri serotype 5b (strain 8401) protein is L-rhamnose isomerase.